We begin with the raw amino-acid sequence, 797 residues long: Inulosucrase (797 aa).

The first 36 residues, 1–36, serve as a signal peptide directing secretion; it reads MLENKNHKKISLSGKSLLMGTLSTAAIVLSASTANA. Over residues 54-64 the composition is skewed to polar residues; it reads ASSVNNENNKQ. The tract at residues 54-176 is disordered; the sequence is ASSVNNENNK…SVKPAENATK (123 aa). Basic and acidic residues-rich tracts occupy residues 65-75 and 82-95; these read VTEKDSADKST and ANTK…ETTE. A compositionally biased stretch (low complexity) spans 130–139; it reads DQKTTNAATT. Over residues 140-167 the composition is skewed to basic and acidic residues; it reads DTKKDDVKQVEKKDSVDKTNAEENKDSS. Tryptophan 271 contacts substrate. Residue aspartate 272 is the Nucleophile of the active site. Asparagine 317 lines the Ca(2+) pocket. A substrate-binding site is contributed by serine 340. Position 419 (aspartate 419) interacts with Ca(2+). 424 to 425 contacts substrate; that stretch reads RD. Residues glutamine 450, tryptophan 487, asparagine 489, and aspartate 521 each contribute to the Ca(2+) site. Substrate-binding positions include 522 to 524 and arginine 542; that span reads EIE. Glutamate 524 serves as the catalytic Proton donor/acceptor. Residues aspartate 660, isoleucine 662, and serine 667 each contribute to the Ca(2+) site. The tract at residues 708–766 is disordered; that stretch reads QPVTPIPNVPTTPETPTTPDKPEVPTTPEVPTTPETPTPEAPKNPVKKTSQSKLPKAGD. The segment covering 718–740 has biased composition (low complexity); that stretch reads TTPETPTTPDKPEVPTTPEVPTT. The LPXTG sorting signal signature appears at 761-765; sequence LPKAG. The residue at position 764 (alanine 764) is a Pentaglycyl murein peptidoglycan amidated alanine. Residues 765–797 constitute a propeptide, removed by sortase; the sequence is GDKNSFAAVVLGAVSSILGAVGLTGVSKRKRNN.

The protein belongs to the glycosyl hydrolase 68 family. The cofactor is Ca(2+).

It is found in the secreted. The protein resides in the cell wall. It catalyses the reaction [(2-&gt;1)-beta-D-fructosyl](n) + sucrose = [(2-&gt;1)-beta-D-fructosyl](n+1) + D-glucose. Functionally, fructosyltransferase that catalyzes the polymerization of the fructose moiety of sucrose to produce inulin polymer and inulin oligosaccharides such as 1-kestose and nystose. This chain is Inulosucrase, found in Lactobacillus johnsonii (strain CNCM I-12250 / La1 / NCC 533).